The sequence spans 36 residues: uncharacterized protein (36 aa).

This is an uncharacterized protein from Enterobacteria phage T4 (Bacteriophage T4).